A 698-amino-acid polypeptide reads, in one-letter code: Pentatricopeptide repeat-containing protein 1, mitochondrial (698 aa).

The segment at 49 to 88 (SSSQLPLGQERQENTGSLGSDPSHSNSTATQEEDEEESFG) is disordered. Polar residues predominate over residues 62 to 78 (NTGSLGSDPSHSNSTAT). PPR repeat units lie at residues 133 to 169 (TPYW…RLQP), 170 to 204 (MESN…DLEP), 205 to 243 (SDAT…NFEL), 244 to 278 (NLKT…GHVV), 279 to 315 (TEET…GLQP), and 316 to 352 (SRDS…ATVL). Positions 392-419 (QALGPPEPPEARVPSKAQPEVDTKAEPS) are disordered. 3 PPR repeats span residues 517–551 (DLTF…GLVP), 552–583 (NLQT…QVTP), and 584–618 (NSHI…RVPV). The tract at residues 670-698 (HPWQKFRTKPQEDQDTRKEADDGCALGGR) is disordered. Basic and acidic residues predominate over residues 678 to 690 (KPQEDQDTRKEAD).

The protein belongs to the PTCD1 family. As to quaternary structure, associates with mitochondrial leucine tRNAs. Interacts with ELAC2.

The protein resides in the mitochondrion. It localises to the mitochondrion matrix. Mitochondrial protein implicated in negative regulation of leucine tRNA levels, as well as negative regulation of mitochondria-encoded proteins and COX activity. Also affects the 3'-processing of mitochondrial tRNAs. In Pongo abelii (Sumatran orangutan), this protein is Pentatricopeptide repeat-containing protein 1, mitochondrial (PTCD1).